The chain runs to 876 residues: Vacuolar protein sorting-associated protein 39 homolog (876 aa).

The CNH domain occupies 14–310; it reads GVQIESIAAY…KFLVHADKGT (297 aa). The CHCR repeat unit spans residues 578–741; sequence ELIEVESLPR…ILIPPTQPLY (164 aa).

It belongs to the VAM6/VPS39 family. In terms of assembly, part of the homotypic fusion and vacuole protein sorting (HOPS) complex, composed of Vps16A, car/Vps33A, dor/Vps18, Vps39, Vps11 and lt/Vps41. Interacts with Rab2 (GTP-bound form); the interaction is probably direct.

It localises to the cytoplasm. The protein resides in the lysosome membrane. It is found in the late endosome membrane. Its subcellular location is the late endosome. The protein localises to the lysosome. Functionally, part of the homotypic fusion and vacuole protein sorting (HOPS) tethering complex involved in endo-lysosomal vesicle trafficking and lysosome biogenesis. The HOPS complex facilitates docking and fusion of lysosomes with late endosomes and several other types of vesicles. The HOPS complex is also involved in autophagy and crinophagy (the elimination of unused secretory granules through their fusion with lysosomes). The HOPS complex mediates autophagocitic flux, probably by binding autophagosome-associated Syx17/syntaxin 17, promoting assembly of the trans-SNARE complex and instigating autophagosome-lysosome fusion. Independent of Syx17/syntaxin 17, HOPS is involved in biosynthetic transport to lysosomes and lysosome-related organelles such as eye-pigment granules. Required for autophagocytosis-dependent remodeling of myofibrils and transverse-tubules (T-tubules) during metamorphosis. This is Vacuolar protein sorting-associated protein 39 homolog from Drosophila melanogaster (Fruit fly).